The following is a 411-amino-acid chain: Carbamoyl phosphate synthase arginine-specific small chain (411 aa).

L-glutamine is bound by residues Ser-50, Gly-232, and Gly-234. The Glutamine amidotransferase type-1 domain maps to 185 to 376 (NVALIDCGVK…FDNIEKYQLQ (192 aa)). Cys-264 acts as the Nucleophile in catalysis. L-glutamine is bound by residues Leu-265, Gln-268, Asn-306, Gly-308, and Tyr-309. Catalysis depends on residues His-349 and Glu-351.

This sequence belongs to the CarA family. As to quaternary structure, heterodimer composed of 2 chains; the small (or glutamine) chain promotes the hydrolysis of glutamine to ammonia, which is used by the large (or ammonia) chain to synthesize carbamoyl phosphate.

Its subcellular location is the cytoplasm. It catalyses the reaction hydrogencarbonate + L-glutamine + 2 ATP + H2O = carbamoyl phosphate + L-glutamate + 2 ADP + phosphate + 2 H(+). The catalysed reaction is L-glutamine + H2O = L-glutamate + NH4(+). Its pathway is amino-acid biosynthesis; L-arginine biosynthesis; carbamoyl phosphate from bicarbonate: step 1/1. Its function is as follows. Small subunit of the arginine-specific carbamoyl phosphate synthase (CPSase). CPSase catalyzes the formation of carbamoyl phosphate from the ammonia moiety of glutamine, carbonate, and phosphate donated by ATP, constituting the first step of 2 biosynthetic pathways, one leading to arginine and/or urea and the other to pyrimidine nucleotides. The small subunit (glutamine amidotransferase) binds and cleaves glutamine to supply the large subunit with the substrate ammonia. The protein is Carbamoyl phosphate synthase arginine-specific small chain (CPA1) of Saccharomyces cerevisiae (strain ATCC 204508 / S288c) (Baker's yeast).